A 302-amino-acid chain; its full sequence is Glutaminase (302 aa).

Substrate contacts are provided by S61, N111, E155, N162, Y186, Y238, and V256.

It belongs to the glutaminase family. In terms of assembly, homotetramer.

It carries out the reaction L-glutamine + H2O = L-glutamate + NH4(+). The polypeptide is Glutaminase (Pseudomonas paraeruginosa (strain DSM 24068 / PA7) (Pseudomonas aeruginosa (strain PA7))).